Consider the following 360-residue polypeptide: Diacylglycerol O-acyltransferase 3 (360 aa).

Residues 153 to 182 (KAKAMKKMTEMDSESSSSSESSDSDCDKGK) form a disordered region. Cys-265, Cys-270, Cys-298, and Cys-302 together coordinate [2Fe-2S] cluster.

It belongs to the diacylglycerol acyltransferase family. [2Fe-2S] cluster is required as a cofactor.

The catalysed reaction is an acyl-CoA + a 1,2-diacyl-sn-glycerol = a triacyl-sn-glycerol + CoA. Its pathway is glycerolipid metabolism; triacylglycerol biosynthesis. Involved in triacylglycerol (TAG) biosynthesis. Catalyzes the acylation of the sn-3 hydroxy group of sn-1,2-diacylglycerol using acyl-CoA. May preferentially use linolenoyl-CoA as substrate and to a lesser extent linoleoyl-CoA. May contribute to the active recycling of linoleate and linolenate into TAG when seed oil breakdown is blocked. The polypeptide is Diacylglycerol O-acyltransferase 3 (Arabidopsis thaliana (Mouse-ear cress)).